We begin with the raw amino-acid sequence, 366 residues long: Aminomethyltransferase (366 aa).

This sequence belongs to the GcvT family. In terms of assembly, the glycine cleavage system is composed of four proteins: P, T, L and H.

It catalyses the reaction N(6)-[(R)-S(8)-aminomethyldihydrolipoyl]-L-lysyl-[protein] + (6S)-5,6,7,8-tetrahydrofolate = N(6)-[(R)-dihydrolipoyl]-L-lysyl-[protein] + (6R)-5,10-methylene-5,6,7,8-tetrahydrofolate + NH4(+). Functionally, the glycine cleavage system catalyzes the degradation of glycine. This Sodalis glossinidius (strain morsitans) protein is Aminomethyltransferase.